An 867-amino-acid polypeptide reads, in one-letter code: Schizokinen transporter SchT (867 aa).

Residues 40-62 (HPGKTQEAPSPTQLNTQSPAPNA) are disordered. Polar residues predominate over residues 46-62 (EAPSPTQLNTQSPAPNA). The TonB box motif lies at 185–192 (IELVVTAT). One can recognise a TBDR plug domain in the interval 197-307 (PIQNVPRSIT…TGGVINIITR (111 aa)). Residues 313-867 (KLTSRTEVGV…TLSIKYSFDW (555 aa)) form the TBDR beta-barrel domain. A TonB C-terminal box motif is present at residues 850–867 (AYAAARGRTLSIKYSFDW).

The protein belongs to the TonB-dependent receptor family.

The protein localises to the cell outer membrane. Involved in the TonB-dependent uptake of iron in complex with schizokinen, a dihydroxamate-type siderophore. The sequence is that of Schizokinen transporter SchT from Nostoc sp. (strain PCC 7120 / SAG 25.82 / UTEX 2576).